We begin with the raw amino-acid sequence, 199 residues long: Dephospho-CoA kinase (199 aa).

The 197-residue stretch at 3–199 (KVGLTGGICS…DLLEFFTLYQ (197 aa)) folds into the DPCK domain. 11–16 (CSGKST) is an ATP binding site.

Belongs to the CoaE family.

Its subcellular location is the cytoplasm. It carries out the reaction 3'-dephospho-CoA + ATP = ADP + CoA + H(+). The protein operates within cofactor biosynthesis; coenzyme A biosynthesis; CoA from (R)-pantothenate: step 5/5. In terms of biological role, catalyzes the phosphorylation of the 3'-hydroxyl group of dephosphocoenzyme A to form coenzyme A. This is Dephospho-CoA kinase from Clostridium perfringens (strain 13 / Type A).